The primary structure comprises 337 residues: GTPase Obg (337 aa).

The 159-residue stretch at 4 to 162 folds into the Obg domain; it reads SNFVDYAKIH…RQIVFQLKLL (159 aa). Residues 163–329 form the OBG-type G domain; it reads ADVGLVGFPN…LKDLLWEKLR (167 aa). Residues 169 to 176, 194 to 198, 216 to 219, 283 to 286, and 310 to 312 each bind GTP; these read GFPNTGKS, FTTLE, DIPG, SKSD, and SSF. Mg(2+) contacts are provided by S176 and T196.

The protein belongs to the TRAFAC class OBG-HflX-like GTPase superfamily. OBG GTPase family. In terms of assembly, monomer. Requires Mg(2+) as cofactor.

Its subcellular location is the cytoplasm. Functionally, an essential GTPase which binds GTP, GDP and possibly (p)ppGpp with moderate affinity, with high nucleotide exchange rates and a fairly low GTP hydrolysis rate. Plays a role in control of the cell cycle, stress response, ribosome biogenesis and in those bacteria that undergo differentiation, in morphogenesis control. The chain is GTPase Obg from Azobacteroides pseudotrichonymphae genomovar. CFP2.